Reading from the N-terminus, the 101-residue chain is Large ribosomal subunit protein bL28 (101 aa).

This sequence belongs to the bacterial ribosomal protein bL28 family.

This is Large ribosomal subunit protein bL28 from Rhodopseudomonas palustris (strain BisB18).